The chain runs to 160 residues: Twist-related protein 2 (160 aa).

The tract at residues 1-63 (MEEGSSSPVS…GSPSAQSFEE (63 aa)) is disordered. Over residues 27–37 (KRFGRKRRYSK) the composition is skewed to basic residues. The 52-residue stretch at 66-117 (SQRILANVRERQRTQSLNEAFAALRKIIPTLPSDKLSKIQTLKLAARYIDFL) folds into the bHLH domain.

As to quaternary structure, efficient DNA binding requires dimerization with another bHLH protein. Forms a heterodimer with TCF3/E12. Also interacts with MEF2C. As to expression, in the embryo, highly expressed in chondrogenic cells. In embryonic skin, expressed in the undifferentiated mesenchymal layer beneath the epidermis which later develops into the dermis. Expressed in early myeloid cells but not in lymphoid cells in the liver. Expression also detected in the secretory ependymal epithelium of the choroid plexus primordium. In the adult, expressed in secreting glandular tissues and tubules.

The protein localises to the nucleus. Its subcellular location is the cytoplasm. Binds to the E-box consensus sequence 5'-CANNTG-3' as a heterodimer and inhibits transcriptional activation by MYOD1, MYOG, MEF2A and MEF2C. Also represses expression of pro-inflammatory cytokines such as TNFA and IL1B. Involved in postnatal glycogen storage and energy metabolism. Inhibits the premature or ectopic differentiation of preosteoblast cells during osteogenesis, possibly by changing the internal signal transduction response of osteoblasts to external growth factors. The sequence is that of Twist-related protein 2 (TWIST2) from Homo sapiens (Human).